The primary structure comprises 134 residues: Cytochrome b5 (134 aa).

Ala2 carries the N-acetylalanine modification. Residues Lys7, Lys10, and Lys19 each carry the N6-acetyllysine modification. One can recognise a Cytochrome b5 heme-binding domain in the interval 9 to 85 (VKYYTLEEIQ…SKTYIIGELH (77 aa)). His44 and His68 together coordinate heme. The helical transmembrane segment at 109 to 131 (WWTNWVIPAISALVVALMYRLYM) threads the bilayer.

Belongs to the cytochrome b5 family.

It is found in the endoplasmic reticulum membrane. It localises to the microsome membrane. In terms of biological role, cytochrome b5 is a membrane-bound hemoprotein functioning as an electron carrier for several membrane-bound oxygenases. It is also involved in several steps of the sterol biosynthesis pathway, particularly in the C-6 double bond introduction during the C-6 desaturation. The sequence is that of Cytochrome b5 (Cyb5a) from Rattus norvegicus (Rat).